The primary structure comprises 373 residues: MANTTGEPEEVSGALSPPSAVAYVKLVLLGLIMCVSLAGNAILSLLVLKDRALHKAPYYFLLDLCLADGIRSAVCFPFVLASVRHGSSWTFSALSCKIVAFMAVLFCFHAAFMLFCISVTRYMAIAHHRFYAKRMTLWTCAAVICMAWTLSVAMAFPPVFDVGTYKFIREEDQCIFEHRYFKANDTLGFMLMLAVLMAATHAVYGKLLLFEYRHRKMKPVQMVPAISQNWTFHGPGATGQAAANWIAGFGRGPMPPTLLGIRQNGHAASRRLLGMDEVKGEKQLGRMFYAITLLFLLLWSPYIVACYWRVFVKACAVPHRYLATAVWMSFAQAAVNPIVCFLLNKDLKKCLRTHAPCWGTGGAPAPREPYCVM.

Over 1–26 (MANTTGEPEEVSGALSPPSAVAYVKL) the chain is Extracellular. Residue N3 is glycosylated (N-linked (GlcNAc...) asparagine). Residues 27–47 (VLLGLIMCVSLAGNAILSLLV) traverse the membrane as a helical segment. Residues 48–59 (LKDRALHKAPYY) are Cytoplasmic-facing. Residues 60–80 (FLLDLCLADGIRSAVCFPFVL) traverse the membrane as a helical segment. Residues 81 to 97 (ASVRHGSSWTFSALSCK) lie on the Extracellular side of the membrane. Cysteines 96 and 174 form a disulfide. The helical transmembrane segment at 98–118 (IVAFMAVLFCFHAAFMLFCIS) threads the bilayer. The Cytoplasmic portion of the chain corresponds to 119-139 (VTRYMAIAHHRFYAKRMTLWT). Residues 140–160 (CAAVICMAWTLSVAMAFPPVF) traverse the membrane as a helical segment. Residues 161–188 (DVGTYKFIREEDQCIFEHRYFKANDTLG) are Extracellular-facing. N-linked (GlcNAc...) asparagine glycosylation occurs at N184. A helical membrane pass occupies residues 189-209 (FMLMLAVLMAATHAVYGKLLL). Topologically, residues 210-287 (FEYRHRKMKP…VKGEKQLGRM (78 aa)) are cytoplasmic. A helical membrane pass occupies residues 288-308 (FYAITLLFLLLWSPYIVACYW). Over 309–322 (RVFVKACAVPHRYL) the chain is Extracellular. Residues 323-343 (ATAVWMSFAQAAVNPIVCFLL) traverse the membrane as a helical segment. The Cytoplasmic portion of the chain corresponds to 344–373 (NKDLKKCLRTHAPCWGTGGAPAPREPYCVM).

This sequence belongs to the G-protein coupled receptor 1 family.

Its subcellular location is the cell membrane. Functionally, is a receptor for the SMIM20 derived peptides Phoenixin-14 and Phoenixin-20. It mediates the Phoenixin-14 and Phoenixin-20 augmentation of gonadotropin-releasing hormone (GNRH) signaling in the hypothalamus and pituitary gland. In the ovary, it mediates the effects of Phoenixin-14 and Phoenixin-20 induced granulosa cell proliferation during follicular growth. In Bos taurus (Bovine), this protein is Probable G-protein coupled receptor 173 (GPR173).